A 362-amino-acid polypeptide reads, in one-letter code: Fe-S cluster assembly protein DRE2 (362 aa).

The disordered stretch occupies residues 1 to 28; it reads MAPGLDLTPDFHPPTTTTTTTNNAPPQQ. A compositionally biased stretch (low complexity) spans 15–28; sequence TTTTTTTNNAPPQQ. The tract at residues 24-165 is N-terminal SAM-like domain; the sequence is APPQQRTLLL…KPEYAEEEAV (142 aa). The segment at 166–254 is linker; that stretch reads PLRFGKKKAA…EETLLTEEDL (89 aa). Positions 264, 275, 278, and 280 each coordinate [2Fe-2S] cluster. Residues 264–280 form a fe-S binding site A region; it reads CQPQPGKKRRACKDCTC. Positions 325, 328, 336, and 339 each coordinate [4Fe-4S] cluster. 2 short sequence motifs (cx2C motif) span residues 325–328 and 336–339; these read CGSC and CSDC. Residues 325–339 are fe-S binding site B; it reads CGSCYLGDAFRCSDC.

Belongs to the anamorsin family. Monomer. Interacts with TAH18. Interacts with MIA40. The cofactor is [2Fe-2S] cluster. [4Fe-4S] cluster serves as cofactor.

Its subcellular location is the cytoplasm. It is found in the mitochondrion intermembrane space. In terms of biological role, component of the cytosolic iron-sulfur (Fe-S) protein assembly (CIA) machinery required for the maturation of extramitochondrial Fe-S proteins. Part of an electron transfer chain functioning in an early step of cytosolic Fe-S biogenesis, facilitating the de novo assembly of a [4Fe-4S] cluster on the scaffold complex CFD1-NBP35. Electrons are transferred to DRE2 from NADPH via the FAD- and FMN-containing protein TAH18. TAH18-DRE2 are also required for the assembly of the diferric tyrosyl radical cofactor of ribonucleotide reductase (RNR), probably by providing electrons for reduction during radical cofactor maturation in the catalytic small subunit RNR2. The polypeptide is Fe-S cluster assembly protein DRE2 (Chaetomium globosum (strain ATCC 6205 / CBS 148.51 / DSM 1962 / NBRC 6347 / NRRL 1970) (Soil fungus)).